The following is a 79-amino-acid chain: Calcium/calmodulin-dependent protein kinase II inhibitor 2 (79 aa).

The interval 43–69 is inhibitory domain; the sequence is KRPPKLGQIGRAKRVVIEDDRIDEVLK.

This sequence belongs to the CAMK2N family.

Its subcellular location is the nucleus. The protein resides in the cytoplasm. It localises to the cytosol. Functionally, potent and specific cellular inhibitor of CaM-kinase II (CAMK2). Traps Ca(2+)/calmodulin on CAMK2. The protein is Calcium/calmodulin-dependent protein kinase II inhibitor 2 (camk2n2) of Xenopus tropicalis (Western clawed frog).